The following is a 369-amino-acid chain: MSXDEYALNKQELKALIKELKKWKAPATVLLSLYIPPGRPIPDVVNLLRQEYSIAQNIKLKRTRDAVLSAIGAAIDRLNKIPKIDGNGLVLFCGENFDTEDFKCFMFSPPDKVPLFFYRTDKEFHLEFLEDMVEDTAVYGLIIVERDEATIGLLKGARIEILEEIEGFVPGKHMMGGQSQRRIDRIIDEMYHNFLKEVGEKVNAYFMPFVQNGKMKGVLLGGPGYAKEDFYKEDYVDYRIKNLILQPLIDVSDQGEVGLREMIMKAEDLLKNQQYIEVEKLLEELKYHLAKDDGLIIYGKEQIKKAMEIGAIEAIVIHEDSTDKELEKLAQDAENYGVKVFVVGDEVPEAEWVKKTFNGIVGKLRYRLY.

The protein belongs to the eukaryotic release factor 1 family. In terms of assembly, heterodimer of two subunits, one of which binds GTP.

The protein resides in the cytoplasm. Directs the termination of nascent peptide synthesis (translation) in response to the termination codons UAA, UAG and UGA. The protein is Peptide chain release factor subunit 1 (prf1) of Saccharolobus solfataricus (strain ATCC 35092 / DSM 1617 / JCM 11322 / P2) (Sulfolobus solfataricus).